Reading from the N-terminus, the 853-residue chain is uncharacterized protein (853 aa).

2 coiled-coil regions span residues 313 to 343 (RTDE…LKVA) and 480 to 528 (EGQV…SELI).

This is an uncharacterized protein from Ostreid herpesvirus 1 (isolate France) (OsHV-1).